The chain runs to 637 residues: ATP-dependent rRNA helicase SPB4 (637 aa).

Residues 14 to 42 carry the Q motif motif; it reads WDTLNPPLSEWIRDAVATMGFDQMTPVQA. The Helicase ATP-binding domain occupies 45–247; the sequence is LPHFMGNKDV…RVGLRNPVKI (203 aa). Residue 58 to 65 coordinates ATP; sequence AVTGSGKT. The DEAD box motif lies at 195-198; it reads DEAD. The Helicase C-terminal domain maps to 283–438; it reads ALAELLRQLP…TITTSEDDAA (156 aa). The stretch at 524–631 forms a coiled coil; the sequence is KEKTREQQRK…AAAKQEKDGE (108 aa). Basic and acidic residues-rich tracts occupy residues 535 to 553, 563 to 576, 583 to 618, and 625 to 637; these read ALEE…EEFK, SAKH…VERR, RDAE…EKAA, and KQEK…GFDD. The interval 535-637 is disordered; sequence ALEEEKSGVK…KDGEFKGFDD (103 aa).

Belongs to the DEAD box helicase family. DDX55/SPB4 subfamily. Component of pre-60S ribosomal complexes.

It localises to the nucleus. It is found in the nucleolus. It carries out the reaction ATP + H2O = ADP + phosphate + H(+). In terms of biological role, ATP-binding RNA helicase involved in the biogenesis of 60S ribosomal subunits. Binds 90S pre-ribosomal particles and dissociates from pre-60S ribosomal particles after processing of 27SB pre-rRNA. Required for the normal formation of 18S rRNA through the processing of pre-rRNAs at sites A0, A1 and A2, and the normal formation of 25S and 5.8S rRNAs through the processing of pre-rRNAs at sites C1 and C2. The sequence is that of ATP-dependent rRNA helicase SPB4 from Gibberella zeae (strain ATCC MYA-4620 / CBS 123657 / FGSC 9075 / NRRL 31084 / PH-1) (Wheat head blight fungus).